The following is a 660-amino-acid chain: Probable rhamnogalacturonate lyase B (660 aa).

A signal peptide spans 1-20; the sequence is MRLSVSLGLASLWTAIGATA. Asn-22, Asn-27, Asn-109, Asn-142, Asn-238, Asn-284, Asn-432, Asn-492, Asn-532, Asn-594, and Asn-635 each carry an N-linked (GlcNAc...) asparagine glycan.

The protein belongs to the polysaccharide lyase 4 family.

The protein resides in the secreted. It carries out the reaction Endotype eliminative cleavage of L-alpha-rhamnopyranosyl-(1-&gt;4)-alpha-D-galactopyranosyluronic acid bonds of rhamnogalacturonan I domains in ramified hairy regions of pectin leaving L-rhamnopyranose at the reducing end and 4-deoxy-4,5-unsaturated D-galactopyranosyluronic acid at the non-reducing end.. Functionally, pectinolytic enzymes consist of four classes of enzymes: pectin lyase, polygalacturonase, pectin methylesterase and rhamnogalacturonase. Degrades the rhamnogalacturonan I (RG-I) backbone of pectin. The protein is Probable rhamnogalacturonate lyase B (rglB) of Aspergillus terreus (strain NIH 2624 / FGSC A1156).